A 288-amino-acid polypeptide reads, in one-letter code: Elongation factor Ts (288 aa).

Positions 82 to 85 (TDFV) are involved in Mg(2+) ion dislocation from EF-Tu.

The protein belongs to the EF-Ts family.

The protein localises to the cytoplasm. Functionally, associates with the EF-Tu.GDP complex and induces the exchange of GDP to GTP. It remains bound to the aminoacyl-tRNA.EF-Tu.GTP complex up to the GTP hydrolysis stage on the ribosome. In Chlorobium phaeovibrioides (strain DSM 265 / 1930) (Prosthecochloris vibrioformis (strain DSM 265)), this protein is Elongation factor Ts.